Here is a 444-residue protein sequence, read N- to C-terminus: Chromosomal replication initiator protein DnaA (444 aa).

A domain I, interacts with DnaA modulators region spans residues 1–66 (MKSEIIESLK…SKTLRELFGK (66 aa)). Residues 66–100 (KPMDFRIEHASAKTEEKLDSNEDEPLVKKRPLILT) are domain II. The segment at 101–317 (PLNPILTFEN…GALVKLIMYQ (217 aa)) is domain III, AAA+ region. Positions 144, 146, 147, and 148 each coordinate ATP. Residues 318–444 (QISGEKVDLQ…VTGQILDQSV (127 aa)) form a domain IV, binds dsDNA region.

This sequence belongs to the DnaA family. In terms of assembly, oligomerizes as a right-handed, spiral filament on DNA at oriC.

Its subcellular location is the cytoplasm. Functionally, plays an essential role in the initiation and regulation of chromosomal replication. ATP-DnaA binds to the origin of replication (oriC) to initiate formation of the DNA replication initiation complex once per cell cycle. Binds the DnaA box (a 9 base pair repeat at the origin) and separates the double-stranded (ds)DNA. Forms a right-handed helical filament on oriC DNA; dsDNA binds to the exterior of the filament while single-stranded (ss)DNA is stabiized in the filament's interior. The ATP-DnaA-oriC complex binds and stabilizes one strand of the AT-rich DNA unwinding element (DUE), permitting loading of DNA polymerase. After initiation quickly degrades to an ADP-DnaA complex that is not apt for DNA replication. Binds acidic phospholipids. This chain is Chromosomal replication initiator protein DnaA, found in Pseudothermotoga lettingae (strain ATCC BAA-301 / DSM 14385 / NBRC 107922 / TMO) (Thermotoga lettingae).